The following is a 241-amino-acid chain: Probable porphobilinogen deaminase (241 aa).

This sequence belongs to the HMBS family.

It carries out the reaction 4 porphobilinogen + H2O = hydroxymethylbilane + 4 NH4(+). The protein operates within porphyrin-containing compound metabolism; protoporphyrin-IX biosynthesis; coproporphyrinogen-III from 5-aminolevulinate: step 2/4. Its function is as follows. Tetrapolymerization of the monopyrrole PBG into the hydroxymethylbilane pre-uroporphyrinogen in several discrete steps. The sequence is that of Probable porphobilinogen deaminase (hemC) from Chlamydia trachomatis serovar D (strain ATCC VR-885 / DSM 19411 / UW-3/Cx).